The chain runs to 370 residues: NADH-quinone oxidoreductase subunit D 2 (370 aa).

The protein belongs to the complex I 49 kDa subunit family. As to quaternary structure, NDH-1 is composed of 14 different subunits. Subunits NuoB, C, D, E, F, and G constitute the peripheral sector of the complex.

The protein localises to the cell inner membrane. It carries out the reaction a quinone + NADH + 5 H(+)(in) = a quinol + NAD(+) + 4 H(+)(out). NDH-1 shuttles electrons from NADH, via FMN and iron-sulfur (Fe-S) centers, to quinones in the respiratory chain. The immediate electron acceptor for the enzyme in this species is believed to be ubiquinone. Couples the redox reaction to proton translocation (for every two electrons transferred, four hydrogen ions are translocated across the cytoplasmic membrane), and thus conserves the redox energy in a proton gradient. In Solibacter usitatus (strain Ellin6076), this protein is NADH-quinone oxidoreductase subunit D 2.